A 143-amino-acid chain; its full sequence is Ribonuclease P protein component 2 (143 aa).

Belongs to the eukaryotic/archaeal RNase P protein component 2 family. In terms of assembly, consists of a catalytic RNA component and at least 4-5 protein subunits.

The protein localises to the cytoplasm. It carries out the reaction Endonucleolytic cleavage of RNA, removing 5'-extranucleotides from tRNA precursor.. Functionally, part of ribonuclease P, a protein complex that generates mature tRNA molecules by cleaving their 5'-ends. The sequence is that of Ribonuclease P protein component 2 from Saccharolobus islandicus (strain Y.N.15.51 / Yellowstone #2) (Sulfolobus islandicus).